The sequence spans 432 residues: Adenylosuccinate synthetase (432 aa).

Residues 16-22 (GDEGKGK) and 44-46 (GHM) contribute to the GTP site. Asp17 acts as the Proton acceptor in catalysis. 2 residues coordinate Mg(2+): Asp17 and Gly44. Residues 17–20 (DEGK), 42–45 (NAGH), Thr132, Arg146, Gln226, Thr241, and Arg305 contribute to the IMP site. His45 functions as the Proton donor in the catalytic mechanism. Residue 301-307 (LNTGRPR) coordinates substrate. GTP is bound by residues Arg307, 333-335 (LFD), and 415-417 (SVG).

The protein belongs to the adenylosuccinate synthetase family. In terms of assembly, homodimer. The cofactor is Mg(2+).

It is found in the cytoplasm. The enzyme catalyses IMP + L-aspartate + GTP = N(6)-(1,2-dicarboxyethyl)-AMP + GDP + phosphate + 2 H(+). The protein operates within purine metabolism; AMP biosynthesis via de novo pathway; AMP from IMP: step 1/2. Functionally, plays an important role in the de novo pathway of purine nucleotide biosynthesis. Catalyzes the first committed step in the biosynthesis of AMP from IMP. This Mycoplasma mycoides subsp. mycoides SC (strain CCUG 32753 / NCTC 10114 / PG1) protein is Adenylosuccinate synthetase.